The sequence spans 436 residues: MGQVLPLVTRQGDRIAIVSGLRTPFARQATAFHGIPAVDLGKMVVGELLARSEIPAEVIEQLVFGQVVQMPEAPNIAREIVLGTGMNVHTDAYSVSRACATSFQAVANVAESLMAGTIRAGIAGGADSSSVLPIGVSKKLARVLVDVNKARTMSQRLKLFSRLRLRDLMPVPPAVAEYSTGLRMGDTAEQMAKTYGITREQQDALAHRSHQRAAQAWSDGKLKEEVMTAFIPPYKQPLVEDNNIRGNSSLADYAKLRPAFDRKHGTVTAANSTPLTDGAAAVILMTESRAKELGLVPLGYLRSYAFTAIDVWQDMLLGPAWSTPLALERAGLTMSDLTLIDMHEAFAAQTLANIQLLGSERFAREVLGRAHATGEVDDSKFNVLGGSIAYGHPFAATGARMITQTLHELRRRGGGFGLVTACAAGGLGAAMVLEAE.

Cysteine 99 (acyl-thioester intermediate) is an active-site residue. Active-site proton acceptor residues include histidine 392 and cysteine 422.

Belongs to the thiolase-like superfamily. Thiolase family. As to quaternary structure, heterotetramer of two alpha chains (FadJ) and two beta chains (FadI).

It localises to the cytoplasm. It catalyses the reaction an acyl-CoA + acetyl-CoA = a 3-oxoacyl-CoA + CoA. It functions in the pathway lipid metabolism; fatty acid beta-oxidation. Functionally, catalyzes the final step of fatty acid oxidation in which acetyl-CoA is released and the CoA ester of a fatty acid two carbons shorter is formed. The protein is 3-ketoacyl-CoA thiolase of Escherichia coli O8 (strain IAI1).